The sequence spans 265 residues: RING finger protein 208 (265 aa).

Residues 83–106 (MPTLEGASHTPPLPRRPRKGSSEL) form a disordered region. Ser-103 carries the phosphoserine modification. The RING-type zinc-finger motif lies at 147 to 194 (CPTCGHTYNVTQRRPRVLSCLHSVCEQCLQILYESCPKYKFISCPTCH).

This chain is RING finger protein 208 (Rnf208), found in Mus musculus (Mouse).